Consider the following 402-residue polypeptide: S-adenosylmethionine synthase (402 aa).

His-16 contacts ATP. Asp-18 provides a ligand contact to Mg(2+). Glu-44 lines the K(+) pocket. The L-methionine site is built by Glu-57 and Gln-103. Positions 103–113 are flexible loop; sequence QSPDIAQGVDT. ATP contacts are provided by residues 178–180, 249–250, Asp-258, 264–265, Ala-281, and Lys-285; these read DGK, KF, and RK. L-methionine is bound at residue Asp-258. An L-methionine-binding site is contributed by Lys-289.

It belongs to the AdoMet synthase family. Homotetramer; dimer of dimers. Requires Mg(2+) as cofactor. K(+) is required as a cofactor.

It localises to the cytoplasm. The catalysed reaction is L-methionine + ATP + H2O = S-adenosyl-L-methionine + phosphate + diphosphate. It participates in amino-acid biosynthesis; S-adenosyl-L-methionine biosynthesis; S-adenosyl-L-methionine from L-methionine: step 1/1. In terms of biological role, catalyzes the formation of S-adenosylmethionine (AdoMet) from methionine and ATP. The overall synthetic reaction is composed of two sequential steps, AdoMet formation and the subsequent tripolyphosphate hydrolysis which occurs prior to release of AdoMet from the enzyme. The sequence is that of S-adenosylmethionine synthase from Mycolicibacterium gilvum (strain PYR-GCK) (Mycobacterium gilvum (strain PYR-GCK)).